The following is a 219-amino-acid chain: MSDWSDLQKDKWINENREVEEVDAWDASSEDEVEKVEEEIKEPPKPVVKQLTKKQALQRAIELKEKELKEPQGDFDIYLEEKRKKELQEASDLENSKNLFSGLSVKESSSGEPISTFIPKTEKDFEQYSQIVSDYLLKYDSSIHYATFFKSLMKKVLVNVSSSDMNDISKTLTVLINEKLKNEKSGKGGNKTKTKVAPKKIHMGNELQNYDDFDDDDFM.

A compositionally biased stretch (acidic residues) spans 22 to 40 (VDAWDASSEDEVEKVEEEI). The disordered stretch occupies residues 22 to 47 (VDAWDASSEDEVEKVEEEIKEPPKPV). A coiled-coil region spans residues 48–100 (VKQLTKKQALQRAIELKEKELKEPQGDFDIYLEEKRKKELQEASDLENSKNLF).

This sequence belongs to the eIF-3 subunit J family. In terms of assembly, component of the eukaryotic translation initiation factor 3 (eIF-3) complex.

Its subcellular location is the cytoplasm. Component of the eukaryotic translation initiation factor 3 (eIF-3) complex, which is involved in protein synthesis of a specialized repertoire of mRNAs and, together with other initiation factors, stimulates binding of mRNA and methionyl-tRNAi to the 40S ribosome. The eIF-3 complex specifically targets and initiates translation of a subset of mRNAs involved in cell proliferation. This Dictyostelium discoideum (Social amoeba) protein is Eukaryotic translation initiation factor 3 subunit J (eif3J).